The following is a 464-amino-acid chain: Ubiquinone biosynthesis monooxygenase COQ6, mitochondrial (464 aa).

A mitochondrion-targeting transit peptide spans 1-24 (MRCLGGSSLSRLLRMLSQSQGRAL).

It belongs to the UbiH/COQ6 family. In terms of assembly, component of a multi-subunit COQ enzyme complex, composed of at least coq3, coq4, coq5, coq6, coq7 and coq9. Interacts with coq8b and coq7. Requires FAD as cofactor.

The protein resides in the mitochondrion inner membrane. The protein localises to the golgi apparatus. It localises to the cell projection. It carries out the reaction a 4-hydroxy-3-(all-trans-polyprenyl)benzoate + 2 reduced [2Fe-2S]-[ferredoxin] + O2 + 2 H(+) = a 3,4-dihydroxy-5-(all-trans-polyprenyl)benzoate + 2 oxidized [2Fe-2S]-[ferredoxin] + H2O. The enzyme catalyses a 2-methoxy-6-(all-trans-polyprenyl)phenol + 2 reduced [2Fe-2S]-[ferredoxin] + O2 + 2 H(+) = a 2-methoxy-6-(all-trans-polyprenyl)benzene-1,4-diol + 2 oxidized [2Fe-2S]-[ferredoxin] + H2O. It participates in cofactor biosynthesis; ubiquinone biosynthesis. In terms of biological role, FAD-dependent monooxygenase required for two non-consecutive steps during ubiquinone biosynthesis. Required for the C5-ring hydroxylation during ubiquinone biosynthesis by catalyzing the hydroxylation of 4-hydroxy-3-(all-trans-polyprenyl)benzoic acid to 3,4-dihydroxy-5-(all-trans-polyprenyl)benzoic acid. Also acts downstream of coq4, for the C1-hydroxylation during ubiquinone biosynthesis by catalyzing the hydroxylation of 2-methoxy-6-(all-trans-polyprenyl)phenol to 2-methoxy-6-(all-trans-polyprenyl)benzene-1,4-diol. The electrons required for the hydroxylation reaction are funneled indirectly to coq6 from NADPH via a ferredoxin/ferredoxin reductase system. The polypeptide is Ubiquinone biosynthesis monooxygenase COQ6, mitochondrial (Xenopus tropicalis (Western clawed frog)).